A 230-amino-acid chain; its full sequence is Potassium/proton antiporter CemA (230 aa).

Transmembrane regions (helical) follow at residues 7 to 27 (LPSL…SSSF), 106 to 126 (IILH…SFFL), 145 to 165 (LNDS…VGFH), and 181 to 201 (FGWA…PVIL).

This sequence belongs to the CemA family.

It is found in the plastid. The protein localises to the chloroplast inner membrane. The enzyme catalyses K(+)(in) + H(+)(out) = K(+)(out) + H(+)(in). Functionally, contributes to K(+)/H(+) antiport activity by supporting proton efflux to control proton extrusion and homeostasis in chloroplasts in a light-dependent manner to modulate photosynthesis. Prevents excessive induction of non-photochemical quenching (NPQ) under continuous-light conditions. Indirectly promotes efficient inorganic carbon uptake into chloroplasts. This Hordeum vulgare (Barley) protein is Potassium/proton antiporter CemA.